Reading from the N-terminus, the 159-residue chain is Phosphopantetheine adenylyltransferase (159 aa).

Threonine 10 lines the substrate pocket. Residues 10–11 and histidine 18 each bind ATP; that span reads TF. 3 residues coordinate substrate: lysine 42, leucine 74, and arginine 88. Residues 89–91, glutamate 99, and 124–130 contribute to the ATP site; these read GLR and YSFISSS.

Belongs to the bacterial CoaD family. Homohexamer. The cofactor is Mg(2+).

It localises to the cytoplasm. It carries out the reaction (R)-4'-phosphopantetheine + ATP + H(+) = 3'-dephospho-CoA + diphosphate. It functions in the pathway cofactor biosynthesis; coenzyme A biosynthesis; CoA from (R)-pantothenate: step 4/5. Functionally, reversibly transfers an adenylyl group from ATP to 4'-phosphopantetheine, yielding dephospho-CoA (dPCoA) and pyrophosphate. The sequence is that of Phosphopantetheine adenylyltransferase from Campylobacter hominis (strain ATCC BAA-381 / DSM 21671 / CCUG 45161 / LMG 19568 / NCTC 13146 / CH001A).